The primary structure comprises 62 residues: Small ribosomal subunit protein uS14 (62 aa).

Zn(2+) is bound by residues C25, C28, C41, and C44.

It belongs to the universal ribosomal protein uS14 family. Zinc-binding uS14 subfamily. In terms of assembly, part of the 30S ribosomal subunit. Contacts proteins S3 and S10. Requires Zn(2+) as cofactor.

Binds 16S rRNA, required for the assembly of 30S particles and may also be responsible for determining the conformation of the 16S rRNA at the A site. The protein is Small ribosomal subunit protein uS14 of Sulfurihydrogenibium sp. (strain YO3AOP1).